Here is a 207-residue protein sequence, read N- to C-terminus: Ribosomal RNA small subunit methyltransferase G (207 aa).

S-adenosyl-L-methionine contacts are provided by residues Gly-76, Gln-81, 127–128, and Arg-141; that span reads VE.

The protein belongs to the methyltransferase superfamily. RNA methyltransferase RsmG family.

The protein localises to the cytoplasm. The catalysed reaction is guanosine(527) in 16S rRNA + S-adenosyl-L-methionine = N(7)-methylguanosine(527) in 16S rRNA + S-adenosyl-L-homocysteine. Specifically methylates the N7 position of guanine in position 527 of 16S rRNA. The sequence is that of Ribosomal RNA small subunit methyltransferase G from Neisseria meningitidis serogroup C (strain 053442).